The following is a 284-amino-acid chain: Protein pxr1 (284 aa).

The G-patch domain occupies 25–71; it reads TNRLGFKLLSSYGWVNGNGLGEKQHGRIHNIKVSLKDDTLGIGAKAT. The tract at residues 149–253 is disordered; the sequence is DEDRVCEDAS…KVKEGNRPAS (105 aa). Residues serine 159 and serine 160 each carry the phosphoserine modification. 2 stretches are compositionally biased toward basic residues: residues 166-181 and 196-206; these read EKRKKHSSKKKSKKKT and TKKKKKEHKKK. Basic and acidic residues-rich tracts occupy residues 207–224 and 233–249; these read DKESSSKKRKSGSSDKEE and KDKPESTSSVEKVKEGN.

Belongs to the PINX1 family.

It localises to the nucleus. It is found in the nucleolus. Functionally, involved in rRNA-processing at A0, A1 and A2 sites and negatively regulates telomerase. This is Protein pxr1 (pxr1) from Schizosaccharomyces pombe (strain 972 / ATCC 24843) (Fission yeast).